The primary structure comprises 201 residues: Recombination protein RecR (201 aa).

The segment at 57–72 (CADCRTFTEQEICTIC) adopts a C4-type zinc-finger fold. In terms of domain architecture, Toprim spans 81 to 176 (GLICVVESPA…DASRIAHGVP (96 aa)).

It belongs to the RecR family.

May play a role in DNA repair. It seems to be involved in an RecBC-independent recombinational process of DNA repair. It may act with RecF and RecO. The chain is Recombination protein RecR from Erwinia tasmaniensis (strain DSM 17950 / CFBP 7177 / CIP 109463 / NCPPB 4357 / Et1/99).